Reading from the N-terminus, the 116-residue chain is Aspartate 1-decarboxylase (116 aa).

Ser25 functions as the Schiff-base intermediate with substrate; via pyruvic acid in the catalytic mechanism. Position 25 is a pyruvic acid (Ser) (Ser25). A substrate-binding site is contributed by Thr57. Tyr58 (proton donor) is an active-site residue. 73 to 75 (GAA) is a binding site for substrate.

The protein belongs to the PanD family. As to quaternary structure, heterooctamer of four alpha and four beta subunits. Pyruvate serves as cofactor. In terms of processing, is synthesized initially as an inactive proenzyme, which is activated by self-cleavage at a specific serine bond to produce a beta-subunit with a hydroxyl group at its C-terminus and an alpha-subunit with a pyruvoyl group at its N-terminus.

The protein resides in the cytoplasm. It carries out the reaction L-aspartate + H(+) = beta-alanine + CO2. It functions in the pathway cofactor biosynthesis; (R)-pantothenate biosynthesis; beta-alanine from L-aspartate: step 1/1. Catalyzes the pyruvoyl-dependent decarboxylation of aspartate to produce beta-alanine. This is Aspartate 1-decarboxylase from Parabacteroides distasonis (strain ATCC 8503 / DSM 20701 / CIP 104284 / JCM 5825 / NCTC 11152).